The chain runs to 430 residues: 3-phosphoshikimate 1-carboxyvinyltransferase (430 aa).

3 residues coordinate 3-phosphoshikimate: lysine 25, serine 26, and arginine 30. Residue lysine 25 coordinates phosphoenolpyruvate. Phosphoenolpyruvate is bound by residues glycine 98 and arginine 126. Positions 169, 170, 171, 198, 313, and 342 each coordinate 3-phosphoshikimate. Glutamine 171 serves as a coordination point for phosphoenolpyruvate. The active-site Proton acceptor is the glutamate 313. Positions 346, 387, and 412 each coordinate phosphoenolpyruvate.

The protein belongs to the EPSP synthase family. As to quaternary structure, monomer.

Its subcellular location is the cytoplasm. The catalysed reaction is 3-phosphoshikimate + phosphoenolpyruvate = 5-O-(1-carboxyvinyl)-3-phosphoshikimate + phosphate. It functions in the pathway metabolic intermediate biosynthesis; chorismate biosynthesis; chorismate from D-erythrose 4-phosphate and phosphoenolpyruvate: step 6/7. Its function is as follows. Catalyzes the transfer of the enolpyruvyl moiety of phosphoenolpyruvate (PEP) to the 5-hydroxyl of shikimate-3-phosphate (S3P) to produce enolpyruvyl shikimate-3-phosphate and inorganic phosphate. This is 3-phosphoshikimate 1-carboxyvinyltransferase from Mycobacterium leprae (strain TN).